The sequence spans 329 residues: MAMTAAVKDEISRLPVTRTCCRKAEVSAILRFAGGLHLVSGRIVIEAELDTAMAARRLKRDILEIFGHSSELIVMAPGGLRRGSRYVVRVVAGGDQLARQTGLVDGRGRPIRGLPPQVVSGATCDAEAAWRGAFLAHGSLTEPGRSSSLEVTCPGPEAALALVGAARRLSIAAKAREVRGVDRVVVRDGDAIGALLTRLGAHESVLAWEERRMRREVRATANRLANFDDANLRRSARAAVAAGARVQRALEILADEVPEHLAAAGRLRMEHKQASLEELGALADPPLTKDAVAGRIRRLLAMADKRAQDLGIPGTESNLTEEMADNLAG.

A DNA-binding region (H-T-H motif) is located at residues 275–308; sequence SLEELGALADPPLTKDAVAGRIRRLLAMADKRAQ.

Belongs to the WhiA family.

In terms of biological role, involved in cell division and chromosome segregation. This Streptomyces avermitilis (strain ATCC 31267 / DSM 46492 / JCM 5070 / NBRC 14893 / NCIMB 12804 / NRRL 8165 / MA-4680) protein is Probable cell division protein WhiA.